Here is a 57-residue protein sequence, read N- to C-terminus: uncharacterized protein (57 aa).

A helical membrane pass occupies residues 34-54 (AALLDAAALVVIPGLLTAAAV).

The protein localises to the membrane. This is an uncharacterized protein from Dictyostelium discoideum (Social amoeba).